The chain runs to 202 residues: Recombination protein RecR (202 aa).

A C4-type zinc finger spans residues 61–76 (CARCNSFTEDDICATC). Residues 84–179 (SVLCVVETPA…KVTRLARGVP (96 aa)) form the Toprim domain.

It belongs to the RecR family.

In terms of biological role, may play a role in DNA repair. It seems to be involved in an RecBC-independent recombinational process of DNA repair. It may act with RecF and RecO. This Bordetella petrii (strain ATCC BAA-461 / DSM 12804 / CCUG 43448) protein is Recombination protein RecR.